The sequence spans 401 residues: S-adenosylmethionine synthase (401 aa).

His16 contacts ATP. Asp18 contacts Mg(2+). Residue Glu44 participates in K(+) binding. L-methionine contacts are provided by Glu57 and Gln109. The segment at 109 to 119 (QSAHIAQGVDA) is flexible loop. ATP contacts are provided by residues 174–176 (DAK), Asp251, 257–258 (RK), Ala274, and Lys278. An L-methionine-binding site is contributed by Asp251. An L-methionine-binding site is contributed by Lys282.

The protein belongs to the AdoMet synthase family. Homotetramer; dimer of dimers. Mg(2+) serves as cofactor. Requires K(+) as cofactor.

The protein localises to the cytoplasm. The catalysed reaction is L-methionine + ATP + H2O = S-adenosyl-L-methionine + phosphate + diphosphate. It participates in amino-acid biosynthesis; S-adenosyl-L-methionine biosynthesis; S-adenosyl-L-methionine from L-methionine: step 1/1. Its function is as follows. Catalyzes the formation of S-adenosylmethionine (AdoMet) from methionine and ATP. The overall synthetic reaction is composed of two sequential steps, AdoMet formation and the subsequent tripolyphosphate hydrolysis which occurs prior to release of AdoMet from the enzyme. This is S-adenosylmethionine synthase from Novosphingobium aromaticivorans (strain ATCC 700278 / DSM 12444 / CCUG 56034 / CIP 105152 / NBRC 16084 / F199).